The sequence spans 165 residues: Phosphopantetheine adenylyltransferase (165 aa).

Ser-9 contacts substrate. Residues 9-10 and His-17 each bind ATP; that span reads SF. 3 residues coordinate substrate: Lys-41, Ile-75, and Arg-89. ATP-binding positions include 90–92, Glu-100, and 125–131; these read GVR and YLFVRSD.

This sequence belongs to the bacterial CoaD family. In terms of assembly, homohexamer. Mg(2+) is required as a cofactor.

Its subcellular location is the cytoplasm. It catalyses the reaction (R)-4'-phosphopantetheine + ATP + H(+) = 3'-dephospho-CoA + diphosphate. Its pathway is cofactor biosynthesis; coenzyme A biosynthesis; CoA from (R)-pantothenate: step 4/5. Its function is as follows. Reversibly transfers an adenylyl group from ATP to 4'-phosphopantetheine, yielding dephospho-CoA (dPCoA) and pyrophosphate. This is Phosphopantetheine adenylyltransferase from Borrelia duttonii (strain Ly).